We begin with the raw amino-acid sequence, 376 residues long: Alanine racemase (376 aa).

Residue lysine 40 is the Proton acceptor; specific for D-alanine of the active site. Lysine 40 carries the post-translational modification N6-(pyridoxal phosphate)lysine. A substrate-binding site is contributed by arginine 138. The Proton acceptor; specific for L-alanine role is filled by tyrosine 270. A substrate-binding site is contributed by methionine 317.

Belongs to the alanine racemase family. Pyridoxal 5'-phosphate serves as cofactor.

It catalyses the reaction L-alanine = D-alanine. It participates in amino-acid biosynthesis; D-alanine biosynthesis; D-alanine from L-alanine: step 1/1. Its function is as follows. Catalyzes the interconversion of L-alanine and D-alanine. May also act on other amino acids. The sequence is that of Alanine racemase (alr) from Lactobacillus delbrueckii subsp. bulgaricus (strain ATCC 11842 / DSM 20081 / BCRC 10696 / JCM 1002 / NBRC 13953 / NCIMB 11778 / NCTC 12712 / WDCM 00102 / Lb 14).